We begin with the raw amino-acid sequence, 121 residues long: Small ribosomal subunit protein uS13 (121 aa).

Positions 92–121 (RKGLPMRGQRTRTNARTRKGPRRAAQALKK) are disordered.

The protein belongs to the universal ribosomal protein uS13 family. Part of the 30S ribosomal subunit. Forms a loose heterodimer with protein S19. Forms two bridges to the 50S subunit in the 70S ribosome.

Functionally, located at the top of the head of the 30S subunit, it contacts several helices of the 16S rRNA. In the 70S ribosome it contacts the 23S rRNA (bridge B1a) and protein L5 of the 50S subunit (bridge B1b), connecting the 2 subunits; these bridges are implicated in subunit movement. Contacts the tRNAs in the A and P-sites. The sequence is that of Small ribosomal subunit protein uS13 from Burkholderia cenocepacia (strain ATCC BAA-245 / DSM 16553 / LMG 16656 / NCTC 13227 / J2315 / CF5610) (Burkholderia cepacia (strain J2315)).